The sequence spans 407 residues: P2X receptor D (407 aa).

Residues 1 to 22 (MDWDNIFSYNTAKIVTIKDRRL) lie on the Cytoplasmic side of the membrane. Residues 23-43 (GGLHIIFMVLIIVYIVIYSTI) traverse the membrane as a helical segment. The Lumenal portion of the chain corresponds to 44–300 (YKKGYLLTET…IQNGEIGSFN (257 aa)). Residues 283–296 (RHGIRLIFIQNGEI) are pore-forming motif. The helical transmembrane segment at 301-321 (FQALLLTFVSGLGLLAISTVL) threads the bilayer. The Cytoplasmic portion of the chain corresponds to 322–407 (VDQLAIRFLP…QNIQNNNIIL (86 aa)). Residues 371–394 (KNNENNNNNDDYNDDDNEIFDDNN) form a disordered region. Acidic residues predominate over residues 381 to 391 (DYNDDDNEIFD).

It belongs to the P2X receptor family.

It localises to the contractile vacuole membrane. Its function is as follows. P2X receptors are ligand-gated ion channels that play a role in intracellular calcium signaling. ATP does not evoke inward currents in p2xD. Not essential for osmoregulation. The polypeptide is P2X receptor D (p2xD) (Dictyostelium discoideum (Social amoeba)).